Here is a 465-residue protein sequence, read N- to C-terminus: Cysteine--tRNA ligase (465 aa).

Cys27 is a Zn(2+) binding site. The 'HIGH' region motif lies at 29–39 (PTVYDDAHLGH). Zn(2+)-binding residues include Cys207, His237, and Glu241. The 'KMSKS' region signature appears at 269-273 (KMSKS). Lys272 serves as a coordination point for ATP.

This sequence belongs to the class-I aminoacyl-tRNA synthetase family. In terms of assembly, monomer. Requires Zn(2+) as cofactor.

The protein localises to the cytoplasm. It carries out the reaction tRNA(Cys) + L-cysteine + ATP = L-cysteinyl-tRNA(Cys) + AMP + diphosphate. The sequence is that of Cysteine--tRNA ligase from Helicobacter pylori (strain G27).